The sequence spans 851 residues: Leucine--tRNA ligase (851 aa).

A 'HIGH' region motif is present at residues P51–H61. The short motif at K615–S619 is the 'KMSKS' region element. K618 lines the ATP pocket.

The protein belongs to the class-I aminoacyl-tRNA synthetase family.

The protein localises to the cytoplasm. It carries out the reaction tRNA(Leu) + L-leucine + ATP = L-leucyl-tRNA(Leu) + AMP + diphosphate. This chain is Leucine--tRNA ligase, found in Clavibacter michiganensis subsp. michiganensis (strain NCPPB 382).